Here is a 1002-residue protein sequence, read N- to C-terminus: ToxR-activated gene A lipoprotein (1002 aa).

A signal peptide spans Met-1 to Gly-21. A lipid anchor (N-palmitoyl cysteine) is attached at Cys-22. Residue Cys-22 is the site of S-diacylglycerol cysteine attachment. The disordered stretch occupies residues Asp-31 to Glu-53. Positions Lys-45–Ile-139 constitute a Fibronectin type-III domain. One can recognise a Peptidase M66 domain in the interval Glu-282–Val-536. Zn(2+) is bound at residue His-432. Residue Glu-433 is part of the active site. The Zn(2+) site is built by His-436 and His-442.

Zn(2+) serves as cofactor.

Its subcellular location is the cell membrane. This is ToxR-activated gene A lipoprotein (tagA) from Vibrio cholerae serotype O1 (strain ATCC 39315 / El Tor Inaba N16961).